The following is a 155-amino-acid chain: Ciliary microtubule inner protein 2C (155 aa).

This sequence belongs to the CIMIP2 family.

Its subcellular location is the cytoplasm. It localises to the cytoskeleton. It is found in the cilium axoneme. Its function is as follows. Microtubule inner protein (MIP) part of the dynein-decorated doublet microtubules (DMTs) in cilia axoneme, which is required for motile cilia beating. The protein is Ciliary microtubule inner protein 2C (cimip2ca) of Xenopus laevis (African clawed frog).